The primary structure comprises 242 residues: Segregation and condensation protein A (242 aa).

The protein belongs to the ScpA family. Component of a cohesin-like complex composed of ScpA, ScpB and the Smc homodimer, in which ScpA and ScpB bind to the head domain of Smc. The presence of the three proteins is required for the association of the complex with DNA.

It localises to the cytoplasm. Participates in chromosomal partition during cell division. May act via the formation of a condensin-like complex containing Smc and ScpB that pull DNA away from mid-cell into both cell halves. This Lactococcus lactis subsp. cremoris (strain SK11) protein is Segregation and condensation protein A.